The chain runs to 595 residues: Outer dynein arm-docking complex subunit 3 (595 aa).

The interval 1 to 69 (MTSPLCRAAS…RGAGKPSVHS (69 aa)) is disordered. Coiled coils occupy residues 94-327 (WNIK…REHL) and 385-473 (FAQL…ASKL).

As to quaternary structure, component of the outer dynein arm-docking complex along with ODAD1, ODAD2, ODAD4 and CLXN. Interacts with ODAD1. Interacts with PIERCE1 and PIERCE2; the interactions link the outer dynein arms docking complex (ODA-DC) to the internal microtubule inner proteins (MIP) in cilium axoneme.

Its subcellular location is the cytoplasm. The protein localises to the cytoskeleton. It is found in the cilium basal body. It localises to the microtubule organizing center. The protein resides in the centrosome. Its subcellular location is the centriole. The protein localises to the cilium axoneme. Component of the outer dynein arm-docking complex (ODA-DC) that mediates outer dynein arms (ODA) binding onto the doublet microtubule. Involved in mediating assembly of both ODAs and their axonemal docking complex onto ciliary microtubules. The protein is Outer dynein arm-docking complex subunit 3 of Homo sapiens (Human).